Reading from the N-terminus, the 316-residue chain is Aspartate carbamoyltransferase catalytic subunit (316 aa).

Positions 58 and 59 each coordinate carbamoyl phosphate. L-aspartate is bound at residue K86. 3 residues coordinate carbamoyl phosphate: R108, H136, and Q139. Residues R169 and R223 each contribute to the L-aspartate site. Carbamoyl phosphate is bound by residues G264 and P265.

This sequence belongs to the aspartate/ornithine carbamoyltransferase superfamily. ATCase family. In terms of assembly, heterododecamer (2C3:3R2) of six catalytic PyrB chains organized as two trimers (C3), and six regulatory PyrI chains organized as three dimers (R2).

The catalysed reaction is carbamoyl phosphate + L-aspartate = N-carbamoyl-L-aspartate + phosphate + H(+). The protein operates within pyrimidine metabolism; UMP biosynthesis via de novo pathway; (S)-dihydroorotate from bicarbonate: step 2/3. Functionally, catalyzes the condensation of carbamoyl phosphate and aspartate to form carbamoyl aspartate and inorganic phosphate, the committed step in the de novo pyrimidine nucleotide biosynthesis pathway. The chain is Aspartate carbamoyltransferase catalytic subunit from Dinoroseobacter shibae (strain DSM 16493 / NCIMB 14021 / DFL 12).